The sequence spans 764 residues: Oxysterol-binding protein-related protein 10 (764 aa).

Residues 1–74 form a disordered region; the sequence is MERAVQGTDG…PSGGGGRRRE (74 aa). Low complexity-rich tracts occupy residues 15–47 and 55–65; these read NSSS…SAAA and RSSPGSVAASP. 2 positions are modified to phosphoserine: S29 and S30. R38 bears the Omega-N-methylarginine mark. 3 positions are modified to phosphoserine: S57, S60, and S64. The PH domain occupies 74-171; that stretch reads EPALEGVLSK…WVTQLRACAK (98 aa). The residue at position 196 (T196) is a Phosphothreonine. A phosphoserine mark is found at S201, S209, and S223. Disordered regions lie at residues 304–335 and 354–391; these read GQPS…NGTL and AEDE…TELG. Positions 359–370 are enriched in polar residues; sequence TSQPEPEPNSGS. A compositionally biased stretch (acidic residues) spans 374 to 389; sequence LSEDEKSDNEDKEETE. A 1,2-diacyl-sn-glycero-3-phospho-(1D-myo-inositol 4-phosphate)-binding positions include 413 to 418 and 477 to 480; these read LTKVVL and KPYN. A 1,2-diacyl-sn-glycero-3-phospho-L-serine contacts are provided by residues 413-418 and N480; that span reads LTKVVL. The interval 501-520 is disordered; that stretch reads KRTASRSPASCHEHPMADDP. Over residues 511–520 the composition is skewed to basic and acidic residues; the sequence is CHEHPMADDP. Position 535-536 (535-536) interacts with a 1,2-diacyl-sn-glycero-3-phospho-(1D-myo-inositol 4-phosphate); it reads HH. S561 serves as a coordination point for a 1,2-diacyl-sn-glycero-3-phospho-L-serine. Residues 713–740 are a coiled coil; that stretch reads DIDAATEQKRHLEEKQRVEERKRENLRT. The a 1,2-diacyl-sn-glycero-3-phospho-(1D-myo-inositol 4-phosphate) site is built by K721, E725, and R729.

The protein belongs to the OSBP family. In terms of assembly, interacts with OSBPL9. Interacts with DIAPH1.

The protein localises to the cytoplasm. Its subcellular location is the cytoskeleton. Probable lipid transporter involved in lipid countertransport between the endoplasmic reticulum and the plasma membrane. Its ability to bind phosphatidylserine, suggests that it specifically exchanges phosphatidylserine with phosphatidylinositol 4-phosphate (PI4P), delivering phosphatidylserine to the plasma membrane in exchange for PI4P. Plays a role in negative regulation of lipid biosynthesis. Negatively regulates APOB secretion from hepatocytes. Binds cholesterol and acidic phospholipids. Also binds 25-hydroxycholesterol. Binds phosphatidylserine. In Homo sapiens (Human), this protein is Oxysterol-binding protein-related protein 10 (OSBPL10).